The following is a 388-amino-acid chain: Succinate--CoA ligase [ADP-forming] subunit beta (388 aa).

The ATP-grasp domain occupies 9–244; that stretch reads KQLFSRYGLP…PSQEDPREAQ (236 aa). ATP-binding positions include Lys-46, 53-55, Glu-99, Thr-102, and Glu-107; that span reads GRG. Mg(2+) contacts are provided by Asn-199 and Asp-213. Substrate-binding positions include Asn-264 and 321-323; that span reads GIV.

Belongs to the succinate/malate CoA ligase beta subunit family. Heterotetramer of two alpha and two beta subunits. It depends on Mg(2+) as a cofactor.

The enzyme catalyses succinate + ATP + CoA = succinyl-CoA + ADP + phosphate. It carries out the reaction GTP + succinate + CoA = succinyl-CoA + GDP + phosphate. It participates in carbohydrate metabolism; tricarboxylic acid cycle; succinate from succinyl-CoA (ligase route): step 1/1. Succinyl-CoA synthetase functions in the citric acid cycle (TCA), coupling the hydrolysis of succinyl-CoA to the synthesis of either ATP or GTP and thus represents the only step of substrate-level phosphorylation in the TCA. The beta subunit provides nucleotide specificity of the enzyme and binds the substrate succinate, while the binding sites for coenzyme A and phosphate are found in the alpha subunit. The protein is Succinate--CoA ligase [ADP-forming] subunit beta of Proteus mirabilis (strain HI4320).